The chain runs to 142 residues: Large ribosomal subunit protein uL11 (142 aa).

This sequence belongs to the universal ribosomal protein uL11 family. In terms of assembly, part of the ribosomal stalk of the 50S ribosomal subunit. Interacts with L10 and the large rRNA to form the base of the stalk. L10 forms an elongated spine to which L12 dimers bind in a sequential fashion forming a multimeric L10(L12)X complex. In terms of processing, one or more lysine residues are methylated.

In terms of biological role, forms part of the ribosomal stalk which helps the ribosome interact with GTP-bound translation factors. The chain is Large ribosomal subunit protein uL11 from Colwellia psychrerythraea (strain 34H / ATCC BAA-681) (Vibrio psychroerythus).